We begin with the raw amino-acid sequence, 2617 residues long: Ubiquitin carboxyl-terminal hydrolase 24 (2617 aa).

One can recognise a UBA domain in the interval 3-44; it reads SEEEQHMTTLLCMGFSDPATIRKALRLAKNDINEAVALLTNE. The disordered stretch occupies residues 45-99; the sequence is RPGLDYGGYEPMDSGGPSPGPGGGPRGDSGSDGSGPSRGGSTGGGGGFDPPPAYH. A phosphoserine mark is found at S62 and S85. Positions 65–92 are enriched in gly residues; it reads PGGGPRGDSGSDGSGPSRGGSTGGGGGF. Y939 carries the phosphotyrosine modification. Disordered regions lie at residues 1030–1056 and 1127–1148; these read KTSGSGTPSGSSADSSTSSSSSSSGAF and LLSETSSQSSKSPSLSSKQQHQ. Low complexity-rich tracts occupy residues 1031-1056 and 1128-1148; these read TSGSGTPSGSSADSSTSSSSSSSGAF and LSETSSQSSKSPSLSSKQQHQ. S1138 and S1282 each carry phosphoserine. Residues 1686–2039 form the USP domain; that stretch reads VGLRNGGATC…NAYMLFYQRV (354 aa). C1695 acts as the Nucleophile in catalysis. The segment at 1920-1942 is disordered; it reads QDSSSEVGENGRNMDQGGGGSPR. Residue S1940 is modified to Phosphoserine. H1967 serves as the catalytic Proton acceptor. Phosphoserine occurs at positions 2044, 2074, and 2558. Positions 2060 to 2087 are disordered; the sequence is AEDLSLSAPSSPEISPQSSPRPHRPNND. Low complexity predominate over residues 2066 to 2079; it reads SAPSSPEISPQSSP. Phosphothreonine is present on T2562. A disordered region spans residues 2572 to 2617; it reads EKEQSGSSNGSESSPANENGERHLQQGSESPMMIGELRSDLDDVDP. The segment covering 2576–2589 has biased composition (low complexity); the sequence is SGSSNGSESSPANE. Phosphoserine is present on S2601. Over residues 2608–2617 the composition is skewed to basic and acidic residues; it reads LRSDLDDVDP.

It belongs to the peptidase C19 family.

The enzyme catalyses Thiol-dependent hydrolysis of ester, thioester, amide, peptide and isopeptide bonds formed by the C-terminal Gly of ubiquitin (a 76-residue protein attached to proteins as an intracellular targeting signal).. In terms of biological role, protease that can remove conjugated ubiquitin from target proteins and polyubiquitin chains. Deubiquitinates DDB2, preventing its proteasomal degradation. The polypeptide is Ubiquitin carboxyl-terminal hydrolase 24 (Usp24) (Mus musculus (Mouse)).